Here is a 253-residue protein sequence, read N- to C-terminus: Testis-expressed protein 47 (253 aa).

The chain is Testis-expressed protein 47 from Rattus norvegicus (Rat).